The primary structure comprises 102 residues: Small ribosomal subunit protein uS10 (102 aa).

The protein belongs to the universal ribosomal protein uS10 family. In terms of assembly, part of the 30S ribosomal subunit.

Its function is as follows. Involved in the binding of tRNA to the ribosomes. The sequence is that of Small ribosomal subunit protein uS10 from Bartonella henselae (strain ATCC 49882 / DSM 28221 / CCUG 30454 / Houston 1) (Rochalimaea henselae).